Consider the following 449-residue polypeptide: Tubulin alpha-8 chain (449 aa).

The MREC motif motif lies at 1 to 4; sequence MREC. GTP-binding residues include glutamine 11, glutamate 71, serine 140, glycine 144, threonine 145, threonine 179, asparagine 206, and asparagine 228. Position 71 (glutamate 71) interacts with Mg(2+). Glutamate 254 is an active-site residue.

The protein belongs to the tubulin family. Dimer of alpha and beta chains. A typical microtubule is a hollow water-filled tube with an outer diameter of 25 nm and an inner diameter of 15 nM. Alpha-beta heterodimers associate head-to-tail to form protofilaments running lengthwise along the microtubule wall with the beta-tubulin subunit facing the microtubule plus end conferring a structural polarity. Microtubules usually have 13 protofilaments but different protofilament numbers can be found in some organisms and specialized cells. Mg(2+) serves as cofactor. Post-translationally, some glutamate residues at the C-terminus are polyglycylated, resulting in polyglycine chains on the gamma-carboxyl group. Glycylation is mainly limited to tubulin incorporated into axonemes (cilia and flagella) whereas glutamylation is prevalent in neuronal cells, centrioles, axonemes, and the mitotic spindle. Both modifications can coexist on the same protein on adjacent residues, and lowering polyglycylation levels increases polyglutamylation, and reciprocally. Cilia and flagella glycylation is required for their stability and maintenance. Flagella glycylation controls sperm motility. Some glutamate residues at the C-terminus are polyglutamylated, resulting in polyglutamate chains on the gamma-carboxyl group. Polyglutamylation plays a key role in microtubule severing by spastin (SPAST). SPAST preferentially recognizes and acts on microtubules decorated with short polyglutamate tails: severing activity by SPAST increases as the number of glutamates per tubulin rises from one to eight, but decreases beyond this glutamylation threshold. Glutamylation is also involved in cilia motility. In terms of processing, the C-terminal phenylalanine residue is cleaved by MATCAP1/KIAA0895L.

It is found in the cytoplasm. Its subcellular location is the cytoskeleton. The enzyme catalyses GTP + H2O = GDP + phosphate + H(+). In terms of biological role, tubulin is the major constituent of microtubules, a cylinder consisting of laterally associated linear protofilaments composed of alpha- and beta-tubulin heterodimers. Microtubules grow by the addition of GTP-tubulin dimers to the microtubule end, where a stabilizing cap forms. Below the cap, tubulin dimers are in GDP-bound state, owing to GTPase activity of alpha-tubulin. This is Tubulin alpha-8 chain (TUBA8) from Bos taurus (Bovine).